The sequence spans 233 residues: Clathrin light chain (233 aa).

The segment at 1–124 is disordered; the sequence is MSEKFPPLED…EDRSEVVDQW (124 aa). The span at 17 to 43 shows a compositional bias: basic and acidic residues; sequence PNDKKDDDTDFLKREAEILGDEFKTEQ. Thr-49 is subject to Phosphothreonine. Ser-52 is subject to Phosphoserine. The segment covering 56-67 has biased composition (acidic residues); the sequence is DDDEIRDFEEQF. Polar residues predominate over residues 69-92; that stretch reads DINSANGAVSSDQNGSATVSSGND. Positions 112–124 are enriched in basic and acidic residues; that stretch reads SVKEDRSEVVDQW. The stretch at 125-186 forms a coiled coil; sequence KQRRAVEIHE…EAFLKKRDEF (62 aa). Residues 144 to 204 are involved in binding clathrin heavy chain; the sequence is KELQDEAIKH…DRALQLINQD (61 aa).

This sequence belongs to the clathrin light chain family. Clathrin coats are formed from molecules containing 3 heavy chains and 3 light chains. Interacts with the auxilin-like clathrin uncoating factor SWA2.

It is found in the cytoplasmic vesicle membrane. It localises to the membrane. The protein resides in the coated pit. In terms of biological role, clathrin is the major protein of the polyhedral coat of coated pits and vesicles. In yeast, it is involved in the retention of proteins in an intracellular membrane compartment, presumably the trans-Golgi. The yeast light chain is important for cell growth. The light chain may help to properly orient the assembly/ disassembly of the clathrin coats. The polypeptide is Clathrin light chain (CLC1) (Saccharomyces cerevisiae (strain ATCC 204508 / S288c) (Baker's yeast)).